We begin with the raw amino-acid sequence, 314 residues long: Ecto-ADP-ribosyltransferase 4 (314 aa).

Positions Met1 to Gly46 are cleaved as a signal peptide. Intrachain disulfides connect Cys69–Cys280 and Cys182–Cys231. The TR mART core domain maps to Lys91–Ser276. Residue Asn114 is glycosylated (N-linked (GlcNAc...) asparagine). Tyr126 is a binding site for NAD(+). Asn178 carries an N-linked (GlcNAc...) asparagine glycan. Gln206 is an NAD(+) binding site. N-linked (GlcNAc...) asparagine glycosylation is present at Asn222. An NAD(+)-binding site is contributed by Ser240. N-linked (GlcNAc...) asparagine glycans are attached at residues Asn257 and Asn274. Ala285 carries GPI-anchor amidated alanine lipidation. Positions Ser286–Val314 are cleaved as a propeptide — removed in mature form.

Belongs to the Arg-specific ADP-ribosyltransferase family.

It is found in the cell membrane. The catalysed reaction is L-arginyl-[protein] + NAD(+) = N(omega)-(ADP-D-ribosyl)-L-arginyl-[protein] + nicotinamide + H(+). The polypeptide is Ecto-ADP-ribosyltransferase 4 (ART4) (Pan troglodytes (Chimpanzee)).